The sequence spans 1026 residues: Tyrosine-protein phosphatase 1 (1026 aa).

The FERM domain maps to 29 to 315; the sequence is IRCTVTFLDS…EQHTFFRLKT (287 aa). 4 disordered regions span residues 376–396, 430–456, 489–515, and 584–616; these read SIDSSRYTNTTTTDSPELPSS, PLTTPLSPRRTRDYATDSESSAPSLRQ, GIHASTASVRPVSSGSTPNGASRKSAN, and SFASAGIGGSPPRSKRSPQSNKSSSPVGEDQVV. Polar residues predominate over residues 446–456; it reads DSESSAPSLRQ. Positions 600-609 are enriched in low complexity; that stretch reads SPQSNKSSSP. The 73-residue stretch at 617–689 folds into the PDZ domain; it reads TIKMRPDRHG…DHVVQFIRSA (73 aa). Residues 753-1011 form the Tyrosine-protein phosphatase domain; that stretch reads VVDHFEMLYR…TFVCESILRA (259 aa). Residues aspartate 920, 952-958, and glutamine 996 contribute to the substrate site; that span reads CSAGIGR. Catalysis depends on cysteine 952, which acts as the Phosphocysteine intermediate.

It belongs to the protein-tyrosine phosphatase family. Non-receptor class subfamily.

Its subcellular location is the cytoplasm. It localises to the cytoskeleton. The catalysed reaction is O-phospho-L-tyrosyl-[protein] + H2O = L-tyrosyl-[protein] + phosphate. The chain is Tyrosine-protein phosphatase 1 (ptp-1) from Caenorhabditis elegans.